The primary structure comprises 489 residues: Glutamyl-tRNA(Gln) amidotransferase subunit A (489 aa).

Catalysis depends on charge relay system residues lysine 77 and serine 157. The active-site Acyl-ester intermediate is the serine 181.

It belongs to the amidase family. GatA subfamily. In terms of assembly, heterotrimer of A, B and C subunits.

The catalysed reaction is L-glutamyl-tRNA(Gln) + L-glutamine + ATP + H2O = L-glutaminyl-tRNA(Gln) + L-glutamate + ADP + phosphate + H(+). In terms of biological role, allows the formation of correctly charged Gln-tRNA(Gln) through the transamidation of misacylated Glu-tRNA(Gln) in organisms which lack glutaminyl-tRNA synthetase. The reaction takes place in the presence of glutamine and ATP through an activated gamma-phospho-Glu-tRNA(Gln). The protein is Glutamyl-tRNA(Gln) amidotransferase subunit A of Caulobacter vibrioides (strain ATCC 19089 / CIP 103742 / CB 15) (Caulobacter crescentus).